Consider the following 748-residue polypeptide: Cytosolic phospholipase A2 (748 aa).

Residues 1–178 (MSFIDPYQHI…MKKLLGPKKS (178 aa)) form a phospholipid binding region. The residue at position 2 (Ser2) is a Phosphoserine. Residues 6–122 (PYQHIIVEHQ…KVGEKKEVPF (117 aa)) enclose the C2 domain. Ca(2+) is bound by residues Asp40, Thr41, Asp43, Asn65, Asp93, Ala94, and Asn95. A PLA2c domain is found at 140–739 (SCPDLRFSMA…SNVEARKFFN (600 aa)). The active-site Nucleophile is Ser228. The residue at position 268 (Thr268) is a Phosphothreonine. The segment at 427–458 (KHIVSNDSSDSDDEAQGPKGTENEEAEKEYQS) is disordered. Ser434, Ser435, and Ser437 each carry phosphoserine. The residue at position 505 (Ser505) is a Phosphoserine; by MAPK. Ser515 carries the phosphoserine modification. Residue Lys540 forms a Glycyl lysine isopeptide (Lys-Gly) (interchain with G-Cter in SUMO2) linkage. The Proton acceptor role is filled by Asp548. A Glycyl lysine isopeptide (Lys-Gly) (interchain with G-Cter in SUMO2) cross-link involves residue Lys605. A phosphoserine mark is found at Ser726 and Ser728.

As to quaternary structure, interacts with KAT5. Post-translationally, phosphorylated at both Ser-505 and Ser-726 in response to mitogenic stimuli. Expressed in various organs including uterus, kidney, spleen, liver, heart, lung and brain (at protein level).

The protein localises to the cytoplasm. Its subcellular location is the golgi apparatus membrane. It is found in the nucleus envelope. The enzyme catalyses a 1,2-diacyl-sn-glycero-3-phosphocholine + H2O = a 1-acyl-sn-glycero-3-phosphocholine + a fatty acid + H(+). The catalysed reaction is a 1-O-alkyl-2-acyl-sn-glycero-3-phosphocholine + H2O = a 1-O-alkyl-sn-glycero-3-phosphocholine + a fatty acid + H(+). It carries out the reaction a 1-acyl-sn-glycero-3-phosphocholine + H2O = sn-glycerol 3-phosphocholine + a fatty acid + H(+). It catalyses the reaction 1-hexadecanoyl-2-(5Z,8Z,11Z,14Z-eicosatetraenoyl)-sn-glycero-3-phosphocholine + H2O = 1-hexadecanoyl-sn-glycero-3-phosphocholine + (5Z,8Z,11Z,14Z)-eicosatetraenoate + H(+). The enzyme catalyses 1,2-di-(5Z,8Z,11Z,14Z-eicosatetraenoyl)-sn-glycero-3-phosphocholine + H2O = 1-(5Z,8Z,11Z,14Z-eicosatetraenoyl)-sn-glycero-3-phosphocholine + (5Z,8Z,11Z,14Z)-eicosatetraenoate + H(+). The catalysed reaction is 1-octadecanoyl-2-(5Z,8Z,11Z,14Z-eicosatetraenoyl)-sn-glycero-3-phosphocholine + H2O = 1-octadecanoyl-sn-glycero-3-phosphocholine + (5Z,8Z,11Z,14Z)-eicosatetraenoate + H(+). It carries out the reaction 1-hexadecanoyl-2-(9Z,12Z-octadecadienoyl)-sn-glycero-3-phosphocholine + H2O = (9Z,12Z)-octadecadienoate + 1-hexadecanoyl-sn-glycero-3-phosphocholine + H(+). It catalyses the reaction 1-octadecanoyl-2-(9Z,12Z,15Z-octadecatrienoyl)-sn-glycero-3-phosphocholine + H2O = (9Z,12Z,15Z)-octadecatrienoate + 1-octadecanoyl-sn-glycero-3-phosphocholine + H(+). The enzyme catalyses 1-(5Z,8Z,11Z,14Z-eicosatetraenoyl)-2-hexadecanoyl-sn-glycero-3-phosphocholine + H2O = 1-(5Z,8Z,11Z,14Z-eicosatetraenoyl)-sn-glycero-3-phosphocholine + hexadecanoate + H(+). The catalysed reaction is 1-O-hexadecyl-2-(5Z,8Z,11Z,14Z)-eicosatetraenoyl-sn-glycero-3-phosphocholine + H2O = 1-O-hexadecyl-sn-glycero-3-phosphocholine + (5Z,8Z,11Z,14Z)-eicosatetraenoate + H(+). It carries out the reaction 1,2-di-(9Z-octadecenoyl)-sn-glycero-3-phospho-(1'-sn-glycerol) + H2O = 1-(9Z-octadecenoyl)-sn-glycero-3-phospho-(1'-sn-glycerol) + (9Z)-octadecenoate + H(+). It catalyses the reaction 1-octadecanoyl-2-(5Z,8Z,11Z,14Z-eicosatetraenoyl)-sn-glycero-3-phosphate + H2O = 1-octadecanoyl-sn-glycero-3-phosphate + (5Z,8Z,11Z,14Z)-eicosatetraenoate + H(+). The enzyme catalyses 1-hexadecanoyl-sn-glycero-3-phosphocholine + H2O = sn-glycerol 3-phosphocholine + hexadecanoate + H(+). The catalysed reaction is 2-(prostaglandin E2)-sn-glycero-3-phosphoethanolamine + H2O = sn-glycero-3-phosphoethanolamine + prostaglandin E2 + H(+). It carries out the reaction 2-[(15S)-hydroxy-(5Z,8Z,11Z,13E)-eicosatetraenoyl]-sn-glycero-3-phosphocholine + H2O = (15S)-hydroxy-(5Z,8Z,11Z,13E)-eicosatetraenoate + sn-glycerol 3-phosphocholine + H(+). It catalyses the reaction 2-[(15R)-hydroxy-(5Z,8Z,11Z,13E)-eicosatetraenoyl]-sn-glycero-3-phosphocholine + H2O = (15R)-hydroxy-(5Z,8Z,11Z,13E)-eicosatetraenoate + sn-glycerol 3-phosphocholine + H(+). The enzyme catalyses 2-(prostaglandin E2)-sn-glycero-3-phosphocholine + H2O = prostaglandin E2 + sn-glycerol 3-phosphocholine + H(+). The catalysed reaction is 2-[(11R)-hydroxy-(5Z,8Z,12E,14Z)-eicosatetraenoyl]-sn-glycero-3-phosphocholine + H2O = (11R)-hydroxy-(5Z,8Z,12E,14Z)-eicosatetraenoate + sn-glycerol 3-phosphocholine + H(+). It carries out the reaction 1-(5Z,8Z,11Z,14Z-eicosatetraenoyl)-2-O-hexadecyl-sn-glycero-3-phosphocholine + H2O = 2-O-hexadecyl-sn-glycero-3-phosphocholine + (5Z,8Z,11Z,14Z)-eicosatetraenoate + H(+). It catalyses the reaction 1-octadecanoyl-2-(5Z,8Z,11Z,14Z-eicosatetraenoyl)-sn-glycero-3-phosphocholine + glycerol = 1-(5Z,8Z,11Z,14Z-eicosatetraenoyl)-glycerol + 1-octadecanoyl-sn-glycero-3-phosphocholine. The enzyme catalyses 1-octadecanoyl-2-(9Z,12Z,15Z-octadecatrienoyl)-sn-glycero-3-phosphocholine + glycerol = 1-(9Z,12Z,15Z-octadecatrienoyl)-glycerol + 1-octadecanoyl-sn-glycero-3-phosphocholine. The protein operates within membrane lipid metabolism; glycerophospholipid metabolism. Its pathway is lipid metabolism; arachidonate metabolism. It participates in lipid metabolism; prostaglandin biosynthesis. It functions in the pathway lipid metabolism; leukotriene B4 biosynthesis. With respect to regulation, activated by cytosolic calcium, which is necessary for binding to membrane lipids. Activated by phosphorylation in response to mitogenic stimuli. Stimulated by agonists such as ATP and thrombin. Its function is as follows. Has primarily calcium-dependent phospholipase and lysophospholipase activities, with a major role in membrane lipid remodeling and biosynthesis of lipid mediators of the inflammatory response. Plays an important role in embryo implantation and parturition through its ability to trigger prostanoid production. Preferentially hydrolyzes the ester bond of the fatty acyl group attached at sn-2 position of phospholipids (phospholipase A2 activity). Selectively hydrolyzes sn-2 arachidonoyl group from membrane phospholipids, providing the precursor for eicosanoid biosynthesis via the cyclooxygenase pathway. In an alternative pathway of eicosanoid biosynthesis, hydrolyzes sn-2 fatty acyl chain of eicosanoid lysophopholipids to release free bioactive eicosanoids. Hydrolyzes the ester bond of the fatty acyl group attached at sn-1 position of phospholipids (phospholipase A1 activity) only if an ether linkage rather than an ester linkage is present at the sn-2 position. This hydrolysis is not stereospecific. Has calcium-independent phospholipase A2 and lysophospholipase activities in the presence of phosphoinositides. Has O-acyltransferase activity. Catalyzes the transfer of fatty acyl chains from phospholipids to a primary hydroxyl group of glycerol (sn-1 or sn-3), potentially contributing to monoacylglycerol synthesis. This is Cytosolic phospholipase A2 (Pla2g4a) from Mus musculus (Mouse).